A 338-amino-acid polypeptide reads, in one-letter code: mRNA decay activator protein ZFP36L1 (338 aa).

The necessary and sufficient for the association with mRNA decay enzymes and mRNA decay activation stretch occupies residues 1 to 111; that stretch reads MTTTLVSATI…QKQPGSGQVN (111 aa). Serine 54 carries the post-translational modification Phosphoserine; by MAPKAPK2. Residue serine 90 is modified to Phosphoserine; by PKB/AKT1. Serine 92 is modified (phosphoserine; by PKB/AKT1 and MAPKAPK2). The tract at residues 93–113 is disordered; it reads EGGERLLPTQKQPGSGQVNSS. Residues 101-113 show a composition bias toward polar residues; it reads TQKQPGSGQVNSS. 2 C3H1-type zinc fingers span residues 114-142 and 152-180; these read RYKT…HGIH and KYKT…HNAE. A necessary for mRNA decay activation region spans residues 185–338; that stretch reads LAGGRDLSAD…IFSRLSISDD (154 aa). Residue serine 203 is modified to Phosphoserine; by PKB/AKT1 and MAPKAPK2. Residues 273-338 form a disordered region; sequence SPTTFLFRPM…IFSRLSISDD (66 aa). Over residues 305–318 the composition is skewed to low complexity; sequence YLSSSSSSHSGSDS. Serine 318 is modified (phosphoserine). At serine 334 the chain carries Phosphoserine; by RPS6KA1.

Associates with the cytoplasmic CCR4-NOT deadenylase and RNA exosome complexes to trigger ARE-containing mRNA deadenylation and decay processes. Interacts with CNOT1. Interacts (via N-terminus) with CNOT6. Interacts with CNOT7; this interaction is inhibited in response to phorbol 12-myristate 13-acetate (PMA) treatment in a p38 MAPK-dependent manner. Interacts with DCP1A. Interacts (via N-terminus) with DCP2. Interacts (via N-terminus) with EXOSC2. Interacts with XRN1. Interacts (via phosphorylated form) with YWHAB; this interaction occurs in a protein kinase AKT1-dependent manner. Interacts (via phosphorylated form) with YWHAZ; this interaction occurs in a p38 MAPK- and AKT-signaling pathways. In terms of processing, phosphorylated. Phosphorylated by RPS6KA1 at Ser-334 upon phorbol 12-myristate 13-acetate (PMA) treatment; this phosphorylation results in dissociation of the CCR4-NOT deadenylase complex and induces p38 MAPK-mediated stabilization of the low-density lipoprotein receptor LDLR mRNA. Phosphorylated by protein kinase AKT1 at Ser-92 and Ser-203 in response to insulin; these phosphorylations stabilize ZFP36L1, increase the association with 14-3-3 proteins and mediate ARE-containing mRNA stabilization. AKT1-mediated phosphorylation at Ser-92 does not impair ARE-containing RNA-binding. Phosphorylated at Ser-54, Ser-92 and Ser-203 by MAPKAPK2; these phosphorylations increase the association with 14-3-3 proteins and mediate ARE-containing mRNA stabilization in a protein kinase AKT1-independent manner. MAPKAPK2-mediated phosphorylations at Ser-54, Ser-92 and Ser-203 do not impair ARE-containing RNA-binding. Phosphorylations increase the association with 14-3-3 proteins and mediate ARE-containing mRNA stabilization during early adipogenesis in a p38 MAPK- and AKT-dependent manner. Phosphorylated by protein kinase AKT1 at Ser-92. Ubiquitinated. Ubiquitination leads to proteasomal degradation, a process inhibited by phosphorylations at Ser-90, Ser-92 and Ser-203.

The protein resides in the nucleus. The protein localises to the cytoplasm. It localises to the cytoplasmic granule. Its subcellular location is the P-body. Its function is as follows. Zinc-finger RNA-binding protein that destabilizes several cytoplasmic AU-rich element (ARE)-containing mRNA transcripts by promoting their poly(A) tail removal or deadenylation, and hence provide a mechanism for attenuating protein synthesis. Acts as a 3'-untranslated region (UTR) ARE mRNA-binding adapter protein to communicate signaling events to the mRNA decay machinery. Functions by recruiting the CCR4-NOT deadenylase complex and components of the cytoplasmic RNA decay machinery to the bound ARE-containing mRNAs, and hence promotes ARE-mediated mRNA deadenylation and decay processes. Also induces the degradation of ARE-containing mRNAs even in absence of poly(A) tail. Binds to 3'-UTR ARE of numerous mRNAs. Positively regulates early adipogenesis by promoting ARE-mediated mRNA decay of immediate early genes (IEGs). Promotes ARE-mediated mRNA decay of mineralocorticoid receptor NR3C2 mRNA in response to hypertonic stress. Negatively regulates hematopoietic/erythroid cell differentiation by promoting ARE-mediated mRNA decay of the transcription factor STAT5B mRNA. Positively regulates monocyte/macrophage cell differentiation by promoting ARE-mediated mRNA decay of the cyclin-dependent kinase CDK6 mRNA. Promotes degradation of ARE-containing pluripotency-associated mRNAs in embryonic stem cells (ESCs), such as NANOG, through a fibroblast growth factor (FGF)-induced MAPK-dependent signaling pathway, and hence attenuates ESC self-renewal and positively regulates mesendoderm differentiation. May play a role in mediating pro-apoptotic effects in malignant B-cells by promoting ARE-mediated mRNA decay of BCL2 mRNA. In association with ZFP36L2 maintains quiescence on developing B lymphocytes by promoting ARE-mediated decay of several mRNAs encoding cell cycle regulators that help B cells progress through the cell cycle, and hence ensuring accurate variable-diversity-joining (VDJ) recombination and functional immune cell formation. Together with ZFP36L2 is also necessary for thymocyte development and prevention of T-cell acute lymphoblastic leukemia (T-ALL) transformation by promoting ARE-mediated mRNA decay of the oncogenic transcription factor NOTCH1 mRNA. Participates in the delivery of target ARE-mRNAs to processing bodies (PBs). In addition to its cytosolic mRNA-decay function, plays a role in the regulation of nuclear mRNA 3'-end processing; modulates mRNA 3'-end maturation efficiency of the DLL4 mRNA through binding with an ARE embedded in a weak noncanonical polyadenylation (poly(A)) signal in endothelial cells. Also involved in the regulation of stress granule (SG) and P-body (PB) formation and fusion. Plays a role in vasculogenesis and endocardial development. Plays a role in the regulation of keratinocyte proliferation, differentiation and apoptosis. Plays a role in myoblast cell differentiation. The sequence is that of mRNA decay activator protein ZFP36L1 from Rattus norvegicus (Rat).